Consider the following 148-residue polypeptide: SsrA-binding protein (148 aa).

This sequence belongs to the SmpB family.

It localises to the cytoplasm. Functionally, required for rescue of stalled ribosomes mediated by trans-translation. Binds to transfer-messenger RNA (tmRNA), required for stable association of tmRNA with ribosomes. tmRNA and SmpB together mimic tRNA shape, replacing the anticodon stem-loop with SmpB. tmRNA is encoded by the ssrA gene; the 2 termini fold to resemble tRNA(Ala) and it encodes a 'tag peptide', a short internal open reading frame. During trans-translation Ala-aminoacylated tmRNA acts like a tRNA, entering the A-site of stalled ribosomes, displacing the stalled mRNA. The ribosome then switches to translate the ORF on the tmRNA; the nascent peptide is terminated with the 'tag peptide' encoded by the tmRNA and targeted for degradation. The ribosome is freed to recommence translation, which seems to be the essential function of trans-translation. This Mycoplasma mycoides subsp. mycoides SC (strain CCUG 32753 / NCTC 10114 / PG1) protein is SsrA-binding protein.